A 68-amino-acid polypeptide reads, in one-letter code: uncharacterized protein (68 aa).

The N-terminal stretch at 1–21 (MELYREYPAWLIFLRRTYAVA) is a signal peptide.

This is an uncharacterized protein from Escherichia coli O157:H7.